Consider the following 389-residue polypeptide: Tyrosinase-like protein phomQ1 (389 aa).

A helical membrane pass occupies residues threonine 53–serine 73. The Cu cation site is built by histidine 141 and histidine 150. N-linked (GlcNAc...) asparagine glycosylation is present at asparagine 220. Histidine 290 and histidine 316 together coordinate Cu cation.

Belongs to the tyrosinase family. It depends on Cu(2+) as a cofactor.

It is found in the membrane. It functions in the pathway mycotoxin biosynthesis. Functionally, tyrosinase-like protein; part of the gene cluster that mediates the biosynthesis of the phomopsins, a group of hexapeptide mycotoxins which infects lupins and causes lupinosis disease in livestock. Within the pathway, phomQ1 functions as a halogenase, converting. The pathway starts with the processing of the precursor phomA by several endopeptidases including kexin proteases as well as the cluster-specific S41 family peptidase phomP1 and the oligopeptidase phomG to produce 10 identical copies of the hexapeptide Tyr-Val-Ile-Pro-Ile-Asp. After being excised from the precursor peptide, the core peptides are cyclized and modified post-translationally by enzymes encoded within the gene cluster. The timing and order of proteolysis of the phomA precursor and PTMs are still unknown. Two tyrosinase-like enzymes, phomQ1 and phomQ2, catalyze the chlorination and hydroxylation of Tyr, respectively. PhomYb, is proposed to be involved in the construction of the macrocyclic structure. The other 4 ustYa family proteins may be involved in PTMs that generate the unique structure of phomopsin A. PhomYa is required for the hydroxylation of C-beta of Tyr. PhomYc, phomYd, and phomYe are responsible for the biosynthesis of 2,3-dehydroisoleucine (dIle), 2,3-dehydroaspartic acid (dAsp), and 3,4-dehydroproline (dPro), respectively. While dIle formation by phomYc is indispensable for the installation of dAsp by phomYd, the order of the other PTMs have not been elucidated yet. Most of the biosynthetic enzymes likely have broad substrate specificity, and thus, there might be a metabolic grid from a precursor to phomopsin A. The enzyme(s) responsible for the biosynthesis of 3,4-dehydrovaline (dVal) have also not been identified yet. Finally, phomM acts as an S-adenosylmethionine-dependent alpha-N-methyltransferase that catalyzes two successive N-methylation reactions, converting N-desmethyl-phomopsin A to phomopsin A and phomopsin A further to an N,N-dimethylated congener called phomopsin E. The chain is Tyrosinase-like protein phomQ1 from Diaporthe leptostromiformis (Lupinosis disease fungus).